We begin with the raw amino-acid sequence, 353 residues long: Stachydrine N-demethylase reductase subunit Stc4 (353 aa).

One can recognise an FAD-binding FR-type domain in the interval 11–114 (SDAEPLECVT…IGPAGKFSIV (104 aa)). The 85-residue stretch at 269–353 (AEIAFALSGV…KPLRRVSVEA (85 aa)) folds into the 2Fe-2S ferredoxin-type domain. [2Fe-2S] cluster contacts are provided by Cys-303, Cys-308, Cys-311, and Cys-341.

This sequence in the N-terminal section; belongs to the FAD-binding oxidoreductase type 6 family. As to quaternary structure, the system is probably composed of an oxygenase subunit (Stc2) and two reductase subunits (Stc3 and Stc4). FAD is required as a cofactor. [2Fe-2S] cluster serves as cofactor.

Its function is as follows. Reductase involved in the catabolism of stachydrine (L-proline betaine), a source of carbon and nitrogen. Part of a Rieske-type oxygenase system that catalyzes the demethylation of stachydrine to produce N-methyl-L-proline (monomethylproline). This subunit is probably involved in the transfer of electrons from NAD(P)H to the catalytic subunit Stc2. This chain is Stachydrine N-demethylase reductase subunit Stc4, found in Rhizobium meliloti (strain 1021) (Ensifer meliloti).